Consider the following 392-residue polypeptide: Phosphoglycerate kinase (392 aa).

Residues 21-23, R36, 59-62, R114, and R147 each bind substrate; these read DMN and HLGR. Residues K198, E320, and 346-349 each bind ATP; that span reads GGDT.

This sequence belongs to the phosphoglycerate kinase family. In terms of assembly, monomer.

It localises to the cytoplasm. It carries out the reaction (2R)-3-phosphoglycerate + ATP = (2R)-3-phospho-glyceroyl phosphate + ADP. Its pathway is carbohydrate degradation; glycolysis; pyruvate from D-glyceraldehyde 3-phosphate: step 2/5. This Neisseria meningitidis serogroup C / serotype 2a (strain ATCC 700532 / DSM 15464 / FAM18) protein is Phosphoglycerate kinase.